Consider the following 145-residue polypeptide: D-aminoacyl-tRNA deacylase (145 aa).

The Gly-cisPro motif, important for rejection of L-amino acids signature appears at G137–P138.

It belongs to the DTD family. As to quaternary structure, homodimer.

The protein localises to the cytoplasm. It carries out the reaction glycyl-tRNA(Ala) + H2O = tRNA(Ala) + glycine + H(+). The catalysed reaction is a D-aminoacyl-tRNA + H2O = a tRNA + a D-alpha-amino acid + H(+). Its function is as follows. An aminoacyl-tRNA editing enzyme that deacylates mischarged D-aminoacyl-tRNAs. Also deacylates mischarged glycyl-tRNA(Ala), protecting cells against glycine mischarging by AlaRS. Acts via tRNA-based rather than protein-based catalysis; rejects L-amino acids rather than detecting D-amino acids in the active site. By recycling D-aminoacyl-tRNA to D-amino acids and free tRNA molecules, this enzyme counteracts the toxicity associated with the formation of D-aminoacyl-tRNA entities in vivo and helps enforce protein L-homochirality. The polypeptide is D-aminoacyl-tRNA deacylase (Escherichia coli O81 (strain ED1a)).